Reading from the N-terminus, the 471-residue chain is Pachytene checkpoint protein 2 homolog (471 aa).

213–220 (GPPGTGKT) contacts ATP.

It belongs to the AAA ATPase family. PCH2 subfamily.

Its function is as follows. Plays a key role in chromosome recombination during meiosis. This is Pachytene checkpoint protein 2 homolog from Oryza sativa subsp. indica (Rice).